A 670-amino-acid chain; its full sequence is Lebercilin-like protein (670 aa).

The segment at arginine 24 to alanine 44 is disordered. Coiled-coil stretches lie at residues leucine 148 to glutamate 259 and alanine 305 to isoleucine 336. Residues tyrosine 351–serine 402 form a disordered region. The span at proline 368 to serine 380 shows a compositional bias: polar residues. The stretch at glutamate 420–valine 440 forms a coiled coil. Disordered stretches follow at residues arginine 495–glutamine 520, leucine 533–lysine 594, and glycine 606–aspartate 647. A compositionally biased stretch (polar residues) spans alanine 546–histidine 558. Basic and acidic residues-rich tracts occupy residues serine 560 to serine 572, lysine 585 to lysine 594, and glycine 621 to histidine 632. Residues serine 637–aspartate 647 are compositionally biased toward polar residues.

The protein belongs to the LCA5 family.

In Papio anubis (Olive baboon), this protein is Lebercilin-like protein.